A 177-amino-acid polypeptide reads, in one-letter code: Austinoid biosynthesis clusters protein F (177 aa).

The protein belongs to the trt14 isomerase family. As to quaternary structure, homodimer.

It participates in secondary metabolite biosynthesis; terpenoid biosynthesis. In terms of biological role, part of the gene cluster B that mediates the biosynthesis of austinol and dehydroaustinol, two fungal meroterpenoids. The first step of the pathway is the synthesis of 3,5-dimethylorsellinic acid by the polyketide synthase ausA. 3,5-dimethylorsellinic acid is then prenylated by the polyprenyl transferase ausN. Further epoxidation by the FAD-dependent monooxygenase ausM and cyclization by the probable terpene cyclase ausL lead to the formation of protoaustinoid A. Protoaustinoid A is then oxidized to spiro-lactone preaustinoid A3 by the combined action of the FAD-binding monooxygenases ausB and ausC, and the dioxygenase ausE. Acid-catalyzed keto-rearrangement and ring contraction of the tetraketide portion of preaustinoid A3 by ausJ lead to the formation of preaustinoid A4. The aldo-keto reductase ausK, with the help of ausH, is involved in the next step by transforming preaustinoid A4 into isoaustinone which is in turn hydroxylated by the P450 monooxygenase ausI to form austinolide. Finally, the cytochrome P450 monooxygenase ausG modifies austinolide to austinol. Austinol can be further modified to dehydroaustinol which forms a diffusible complex with diorcinol that initiates conidiation. Due to genetic rearrangements of the clusters and the subsequent loss of some enzymes, the end products of the Emericella nidulans austinoid biosynthesis clusters are austinol and dehydroaustinol, even if additional enzymes, such as the O-acetyltransferase ausQ and the cytochrome P450 monooxygenase ausR are still functional. The sequence is that of Austinoid biosynthesis clusters protein F from Emericella nidulans (strain FGSC A4 / ATCC 38163 / CBS 112.46 / NRRL 194 / M139) (Aspergillus nidulans).